Reading from the N-terminus, the 660-residue chain is Arginine--tRNA ligase, cytoplasmic (660 aa).

Met-1 is modified (N-acetylmethionine). The segment at 1–72 (MDGLVAQCSA…QEERRKPTKN (72 aa)) is could be involved in the assembly of the multisynthetase complex. Residues 200-202 (SPN), His-211, Tyr-384, Asp-388, and Gln-412 each bind L-arginine. A 'HIGH' region motif is present at residues 201 to 212 (PNIAKEMHVGHL). The interaction with tRNA stretch occupies residues 529–543 (NTAAYLLYAFTRIRS).

The protein belongs to the class-I aminoacyl-tRNA synthetase family. As to quaternary structure, interacts (via N-terminus) with AIMP1 (via N-terminus); this stimulates its catalytic activity. Interacts (via N-terminus) with LARS2 (via C-terminus). Monomer. Part of a multisubunit complex that groups tRNA ligases for Arg (RARS1), Asp (DARS1), Gln (QARS1), Ile (IARS1), Leu (LARS1), Lys (KARS1), Met (MARS1) the bifunctional ligase for Glu and Pro (EPRS1) and the auxiliary subunits AIMP1/p43, AIMP2/p38 and EEF1E1/p18. Interacts with QARS1. Part of a complex composed of RARS1, QARS1 and AIMP1.

The protein localises to the cytoplasm. Its subcellular location is the cytosol. The catalysed reaction is tRNA(Arg) + L-arginine + ATP = L-arginyl-tRNA(Arg) + AMP + diphosphate. In terms of biological role, forms part of a macromolecular complex that catalyzes the attachment of specific amino acids to cognate tRNAs during protein synthesis. Modulates the secretion of AIMP1 and may be involved in generation of the inflammatory cytokine EMAP2 from AIMP1. In Mus musculus (Mouse), this protein is Arginine--tRNA ligase, cytoplasmic (Rars1).